A 213-amino-acid chain; its full sequence is ATP phosphoribosyltransferase (213 aa).

Belongs to the ATP phosphoribosyltransferase family. Short subfamily. In terms of assembly, heteromultimer composed of HisG and HisZ subunits.

Its subcellular location is the cytoplasm. It carries out the reaction 1-(5-phospho-beta-D-ribosyl)-ATP + diphosphate = 5-phospho-alpha-D-ribose 1-diphosphate + ATP. Its pathway is amino-acid biosynthesis; L-histidine biosynthesis; L-histidine from 5-phospho-alpha-D-ribose 1-diphosphate: step 1/9. In terms of biological role, catalyzes the condensation of ATP and 5-phosphoribose 1-diphosphate to form N'-(5'-phosphoribosyl)-ATP (PR-ATP). Has a crucial role in the pathway because the rate of histidine biosynthesis seems to be controlled primarily by regulation of HisG enzymatic activity. In Shouchella clausii (strain KSM-K16) (Alkalihalobacillus clausii), this protein is ATP phosphoribosyltransferase.